The primary structure comprises 147 residues: Hemoglobin subunit beta (147 aa).

The Globin domain maps to 3–147; it reads HWSCEEKQFI…VAHALALGYH (145 aa). Heme b is bound by residues His-64 and His-93.

It belongs to the globin family. In terms of assembly, heterotetramer of two alpha-D chains and two beta chains. Red blood cells.

Its function is as follows. Involved in oxygen transport from the lung to the various peripheral tissues. The sequence is that of Hemoglobin subunit beta (HBB) from Chelonoidis carbonarius (Red-footed tortoise).